The chain runs to 346 residues: DNA primase small subunit PriS (346 aa).

Active-site residues include Asp-97, Asp-99, and Asp-278.

Belongs to the eukaryotic-type primase small subunit family. As to quaternary structure, heterodimer of a small subunit (PriS) and a large subunit (PriL). Mg(2+) is required as a cofactor. It depends on Mn(2+) as a cofactor.

Functionally, catalytic subunit of DNA primase, an RNA polymerase that catalyzes the synthesis of short RNA molecules used as primers for DNA polymerase during DNA replication. The small subunit contains the primase catalytic core and has DNA synthesis activity on its own. Binding to the large subunit stabilizes and modulates the activity, increasing the rate of DNA synthesis while decreasing the length of the DNA fragments, and conferring RNA synthesis capability. The DNA polymerase activity may enable DNA primase to also catalyze primer extension after primer synthesis. May also play a role in DNA repair. The sequence is that of DNA primase small subunit PriS from Thermococcus onnurineus (strain NA1).